The chain runs to 594 residues: E3 ubiquitin-protein ligase TRAF7 (594 aa).

Positions 1–33 (MPPINTPRRSDSAISVRSLHSESSMSLRSTFSL) are disordered. 2 positions are modified to phosphoserine: Ser-12 and Ser-15. Residues 15–29 (SVRSLHSESSMSLRS) show a composition bias toward low complexity. The RING-type zinc-finger motif lies at 55 to 89 (CQLCCSVFKDPVITTCGHTFCRRCALKSEKCPVDN). A TRAF-type zinc finger spans residues 146 to 216 (HESSCDYRPV…RFEGLKEFLQ (71 aa)). 7 WD repeats span residues 318 to 357 (GHQGPVWCLCVYSMGDLLFSGSSDKTIKVWDTCTTYKCQK), 361 to 398 (GHDGIVLALCIQGCKLYSGSADCTIIVWDIQNLQKVNT), 401 to 437 (AHDNPVCTLVSSHNMLFSGSLKAIKVWDIVGTELKLK), 439 to 478 (ELTGLNHWVRALVAAQSYLYSGSYQTIKIWDIRTLDCIHV), 481 to 518 (TSGGSVYSIAVTNHHIVCGTYENLIHVWDIESKEQVRT), 521 to 562 (GHVG…CTQT), and 565 to 593 (RHQGSVTALAVSRGRLFSGAVDSTVKVWT).

Belongs to the WD repeat TRAF7 family. In terms of assembly, homodimer. Interacts with MAP3K3 and promotes the kinase activity of this enzyme. Post-translationally, phosphorylated by MAP3K3. In terms of processing, ubiquitinates itself upon phosphorylation. As to expression, ubiquitously expressed. Expression is relatively high in heart, liver, kidney, testis, prostate, thyroid, and salivary gland.

It localises to the cytoplasmic vesicle. It is found in the cytoplasm. The protein resides in the nucleus. The catalysed reaction is S-ubiquitinyl-[E2 ubiquitin-conjugating enzyme]-L-cysteine + [acceptor protein]-L-lysine = [E2 ubiquitin-conjugating enzyme]-L-cysteine + N(6)-ubiquitinyl-[acceptor protein]-L-lysine.. It participates in protein modification; protein ubiquitination. E3 ubiquitin and SUMO-protein ligase that plays a role in different biological processes such as innate immunity, inflammation or apoptosis. Potentiates MAP3K3-mediated activation of the NF-kappa-B, JUN/AP1 and DDIT3 transcriptional regulators. Negatively regulates MYB transcriptional activity by sequestering it to the cytosol via SUMOylation. Plays a role in the phosphorylation of MAPK1 and/or MAPK3, probably via its interaction with MAP3K3. Negatively regulates RLR-mediated innate immunity by promoting 'Lys-48'-linked ubiquitination of TBK1 through its RING domain to inhibit the cellular antiviral response. Promotes 'Lys-29'-linked polyubiquitination of NEMO/IKBKG and RELA leading to targeting these two proteins to lysosomal degradative pathways, reducing the transcriptional activity of NF-kappa-B. This is E3 ubiquitin-protein ligase TRAF7 from Mus musculus (Mouse).